Here is a 568-residue protein sequence, read N- to C-terminus: Periplasmic pectate lyase (568 aa).

An N-terminal signal peptide occupies residues 1–19 (MKRFALSLLAGLVALQASA).

The protein belongs to the polysaccharide lyase 2 family.

It is found in the periplasm. The enzyme catalyses Eliminative cleavage of (1-&gt;4)-alpha-D-galacturonan to give oligosaccharides with 4-deoxy-alpha-D-galact-4-enuronosyl groups at their non-reducing ends.. Its pathway is glycan metabolism; pectin degradation; 2-dehydro-3-deoxy-D-gluconate from pectin: step 2/5. This Pectobacterium carotovorum subsp. carotovorum (Erwinia carotovora subsp. carotovora) protein is Periplasmic pectate lyase (pelB).